Here is a 291-residue protein sequence, read N- to C-terminus: Early E4 34 kDa protein (291 aa).

Belongs to the adenoviridae E4 30 to 34 kDa protein family. In terms of assembly, interacts with E1B-55k.

It is found in the host nucleus. The protein resides in the host cytoplasm. Functionally, plays a major role to prevent cellular inhibition of viral genome replication by nuclear bodies. Assembles an SCF-like E3 ubiquitin ligase complex based on the cellular proteins ELOB, ELOC, CUL5 and RBX1, in cooperation with viral E1B-55K. This viral RING-type ligase ubiquitinates cellular substrates prior to proteasomal degradation: p53/TP53, LIG4, MRE11-RAD50-NBS1 (MRN) complex, ITGA3, DAXX and BLM. This Homo sapiens (Human) protein is Early E4 34 kDa protein.